Here is a 157-residue protein sequence, read N- to C-terminus: MPRSWQEMNALTLAYLGDVVYELWVRTHLLNNGYEKVNELHRLATQYVRAGTQAKLLHHILPHLDEQELSVVHRGRNAKGGHPKSTDVVTYRYATGFEALVGYWQLTGRTERMLWAFEQVDQFVGEEDEGKGKGETAKEEESITDALSPAEQSEIDC.

The active site involves aspartate 18. A disordered region spans residues 126 to 157 (EEDEGKGKGETAKEEESITDALSPAEQSEIDC). Residues 130-141 (GKGKGETAKEEE) show a composition bias toward basic and acidic residues.

The protein belongs to the MrnC RNase family. As to quaternary structure, homodimer. Mg(2+) serves as cofactor.

It localises to the cytoplasm. In terms of biological role, involved in correct processing of both the 5' and 3' ends of 23S rRNA precursor. Processes 30S rRNA precursor transcript even in absence of ribonuclease 3 (Rnc); Rnc processes 30S rRNA into smaller rRNA precursors. The chain is Mini-ribonuclease 3 from Desulfitobacterium hafniense (strain Y51).